The chain runs to 121 residues: Large ribosomal subunit protein bL12 (121 aa).

Belongs to the bacterial ribosomal protein bL12 family. As to quaternary structure, homodimer. Part of the ribosomal stalk of the 50S ribosomal subunit. Forms a multimeric L10(L12)X complex, where L10 forms an elongated spine to which 2 to 4 L12 dimers bind in a sequential fashion. Binds GTP-bound translation factors.

Forms part of the ribosomal stalk which helps the ribosome interact with GTP-bound translation factors. Is thus essential for accurate translation. This Pseudomonas fluorescens (strain SBW25) protein is Large ribosomal subunit protein bL12.